Reading from the N-terminus, the 821-residue chain is PX domain-containing protein C1450.12 (821 aa).

The region spanning 171–310 (AYVLGVRQST…SFLTDDPVTL (140 aa)) is the PX domain. A disordered region spans residues 235–271 (KDDHDTYLNSSEDSTLSPLPSRSSDTNDPQSDSQHVL). Over residues 241 to 268 (YLNSSEDSTLSPLPSRSSDTNDPQSDSQ) the composition is skewed to polar residues. Thr-260 and Thr-597 each carry phosphothreonine. Acidic residues-rich tracts occupy residues 737–746 (GDEDDQDEND) and 754–766 (EHME…EEFD). The tract at residues 737-766 (GDEDDQDENDQVTKVEEEHMEDDDSVEEFD) is disordered. A Phosphoserine modification is found at Ser-761.

It localises to the mitochondrion membrane. The polypeptide is PX domain-containing protein C1450.12 (Schizosaccharomyces pombe (strain 972 / ATCC 24843) (Fission yeast)).